The sequence spans 134 residues: uncharacterized protein (134 aa).

This is an uncharacterized protein from Methanocaldococcus jannaschii (strain ATCC 43067 / DSM 2661 / JAL-1 / JCM 10045 / NBRC 100440) (Methanococcus jannaschii).